The following is a 956-amino-acid chain: Golgin candidate 5 (956 aa).

2 disordered regions span residues 70 to 230 and 278 to 298; these read MSFM…QHKI and IFES…SSDE. Composition is skewed to basic and acidic residues over residues 77–89 and 118–129; these read SDEK…DSVR and ANKETNVRREAD. Polar residues-rich tracts occupy residues 160–177 and 184–193; these read EYSL…SLQP and TASQDSQPEQ. Residues 206-219 are compositionally biased toward basic and acidic residues; sequence SEAKEVTVENKDTV. Residues 333-765 adopt a coiled-coil conformation; it reads SDSADVILEL…LIQKDLEREK (433 aa). At serine 793 the chain carries Phosphoserine. Positions 851–951 form a coiled coil; it reads SAYEATLRQK…EMYREQVNML (101 aa).

As to quaternary structure, interacts with RABH1B and RABH1C, but not with RABD1 or RABD2A.

The protein localises to the golgi apparatus. The protein resides in the cytoplasm. Its function is as follows. Golgi matrix protein playing a role in tethering of vesicles to Golgi membranes and in maintaining the overall structure of the Golgi apparatus. The chain is Golgin candidate 5 (GC5) from Arabidopsis thaliana (Mouse-ear cress).